A 214-amino-acid polypeptide reads, in one-letter code: Pyridoxine/pyridoxamine 5'-phosphate oxidase (214 aa).

Substrate contacts are provided by residues 8–11 and K67; that span reads RKSY. FMN-binding positions include 62–67, 77–78, K84, and Q106; these read RVVLLK and YT. Substrate-binding residues include Y124, R128, and S132. FMN-binding positions include 141–142 and W186; that span reads QS. Residue 192 to 194 coordinates substrate; that stretch reads RLH. Residue R196 coordinates FMN.

This sequence belongs to the pyridoxamine 5'-phosphate oxidase family. As to quaternary structure, homodimer. FMN is required as a cofactor.

The catalysed reaction is pyridoxamine 5'-phosphate + O2 + H2O = pyridoxal 5'-phosphate + H2O2 + NH4(+). It catalyses the reaction pyridoxine 5'-phosphate + O2 = pyridoxal 5'-phosphate + H2O2. It functions in the pathway cofactor metabolism; pyridoxal 5'-phosphate salvage; pyridoxal 5'-phosphate from pyridoxamine 5'-phosphate: step 1/1. The protein operates within cofactor metabolism; pyridoxal 5'-phosphate salvage; pyridoxal 5'-phosphate from pyridoxine 5'-phosphate: step 1/1. Functionally, catalyzes the oxidation of either pyridoxine 5'-phosphate (PNP) or pyridoxamine 5'-phosphate (PMP) into pyridoxal 5'-phosphate (PLP). This Flavobacterium psychrophilum (strain ATCC 49511 / DSM 21280 / CIP 103535 / JIP02/86) protein is Pyridoxine/pyridoxamine 5'-phosphate oxidase.